The sequence spans 352 residues: Phosphate acyltransferase (352 aa).

Positions 328-339 are enriched in basic and acidic residues; it reads ESFPGDAREREG. A disordered region spans residues 328 to 352; that stretch reads ESFPGDAREREGAPAPDAGTERVAS.

Belongs to the PlsX family. As to quaternary structure, homodimer. Probably interacts with PlsY.

The protein localises to the cytoplasm. The catalysed reaction is a fatty acyl-[ACP] + phosphate = an acyl phosphate + holo-[ACP]. It functions in the pathway lipid metabolism; phospholipid metabolism. Catalyzes the reversible formation of acyl-phosphate (acyl-PO(4)) from acyl-[acyl-carrier-protein] (acyl-ACP). This enzyme utilizes acyl-ACP as fatty acyl donor, but not acyl-CoA. This chain is Phosphate acyltransferase, found in Citrifermentans bemidjiense (strain ATCC BAA-1014 / DSM 16622 / JCM 12645 / Bem) (Geobacter bemidjiensis).